The chain runs to 340 residues: Phenylalanine--tRNA ligase alpha subunit (340 aa).

Glu-255 serves as a coordination point for Mg(2+).

This sequence belongs to the class-II aminoacyl-tRNA synthetase family. Phe-tRNA synthetase alpha subunit type 1 subfamily. In terms of assembly, tetramer of two alpha and two beta subunits. The cofactor is Mg(2+).

Its subcellular location is the cytoplasm. It carries out the reaction tRNA(Phe) + L-phenylalanine + ATP = L-phenylalanyl-tRNA(Phe) + AMP + diphosphate + H(+). The sequence is that of Phenylalanine--tRNA ligase alpha subunit from Exiguobacterium sp. (strain ATCC BAA-1283 / AT1b).